The primary structure comprises 190 residues: Probable DNA replication complex GINS protein PSF2 (190 aa).

It belongs to the GINS2/PSF2 family. As to quaternary structure, component of the GINS complex which is a heterotetramer of gins1, gins2, gins3 and gins4.

The protein resides in the nucleus. Its function is as follows. The GINS complex plays an essential role in the initiation of DNA replication. The chain is Probable DNA replication complex GINS protein PSF2 from Brugia malayi (Filarial nematode worm).